A 285-amino-acid polypeptide reads, in one-letter code: Eukaryotic translation initiation factor 3 subunit F-2 (285 aa).

In terms of domain architecture, MPN spans 11-145 (VFLKPLVLFQ…TRLYCAVEMG (135 aa)).

It belongs to the eIF-3 subunit F family. Component of the eukaryotic translation initiation factor 3 (eIF-3) complex. The eIF-3 complex interacts with pix.

It localises to the cytoplasm. Its function is as follows. Component of the eukaryotic translation initiation factor 3 (eIF-3) complex, which is involved in protein synthesis of a specialized repertoire of mRNAs and, together with other initiation factors, stimulates binding of mRNA and methionyl-tRNAi to the 40S ribosome. The eIF-3 complex specifically targets and initiates translation of a subset of mRNAs involved in cell proliferation. The polypeptide is Eukaryotic translation initiation factor 3 subunit F-2 (Drosophila simulans (Fruit fly)).